The primary structure comprises 239 residues: mRNA turnover protein 4 homolog (239 aa).

Residues 216–239 (QQMDDDLPESAPESEGESEEEDDS) are disordered. Residues 218–239 (MDDDLPESAPESEGESEEEDDS) are compositionally biased toward acidic residues. Phosphoserine occurs at positions 225, 229, and 233.

This sequence belongs to the universal ribosomal protein uL10 family. Associates with the pre-60S ribosomal particle. Interacts with MINAS-60 (product of an alternative open reading frame of RBM10).

It localises to the nucleus. It is found in the nucleolus. The protein localises to the cytoplasm. Its function is as follows. Component of the ribosome assembly machinery. Nuclear paralog of the ribosomal protein P0, it binds pre-60S subunits at an early stage of assembly in the nucleolus, and is replaced by P0 in cytoplasmic pre-60S subunits and mature 80S ribosomes. The polypeptide is mRNA turnover protein 4 homolog (Mrto4) (Mus musculus (Mouse)).